Reading from the N-terminus, the 2508-residue chain is Male gametocyte surface protein P230p (2508 aa).

A signal peptide spans 1-34 (MFIYLFIYLFFKMDKKRTFYYLFFFFTFLVYVLY). 4 N-linked (GlcNAc...) asparagine glycosylation sites follow: asparagine 230, asparagine 254, asparagine 362, and asparagine 414. A 6-Cys 1 domain is found at 394-516 (KILGLSTNEK…GLGETSVDKD (123 aa)). Cysteine 443 and cysteine 493 are joined by a disulfide. Asparagine 601 and asparagine 674 each carry an N-linked (GlcNAc...) asparagine glycan. 5 consecutive 6-Cys domains span residues 676–800 (SVSF…IVKR), 831–1096 (ITYL…LKSF), 1099–1231 (PIEG…LELN), 1268–1428 (KKHI…IPQH), and 1433–1565 (KFYG…NEDI). A disulfide bond links cysteine 680 and cysteine 700. Asparagine 703 carries an N-linked (GlcNAc...) asparagine glycan. Cystine bridges form between cysteine 714/cysteine 775 and cysteine 725/cysteine 773. Residues asparagine 779, asparagine 849, asparagine 986, asparagine 995, asparagine 1065, and asparagine 1074 are each glycosylated (N-linked (GlcNAc...) asparagine). 2 cysteine pairs are disulfide-bonded: cysteine 835–cysteine 856 and cysteine 871–cysteine 1072. Disulfide bonds link cysteine 1103/cysteine 1129, cysteine 1144/cysteine 1206, and cysteine 1157/cysteine 1204. The N-linked (GlcNAc...) asparagine glycan is linked to asparagine 1231. Cystine bridges form between cysteine 1272–cysteine 1293, cysteine 1308–cysteine 1404, cysteine 1437–cysteine 1464, cysteine 1478–cysteine 1547, and cysteine 1488–cysteine 1545. Residue asparagine 1385 is glycosylated (N-linked (GlcNAc...) asparagine). Asparagine 1525, asparagine 1550, asparagine 1567, asparagine 1750, asparagine 1755, and asparagine 1788 each carry an N-linked (GlcNAc...) asparagine glycan. 6-Cys domains are found at residues 1656 to 1804 (KKKI…IKKN) and 1807 to 1984 (KILG…IVGD). A disulfide bond links cysteine 1704 and cysteine 1782. 3 disulfide bridges follow: cysteine 1811/cysteine 1883, cysteine 1897/cysteine 1966, and cysteine 1908/cysteine 1964. Asparagine 2016 and asparagine 2047 each carry an N-linked (GlcNAc...) asparagine glycan. A disordered region spans residues 2081–2113 (SDEGDGYQADEDIGGEDDAEDVDGEGDDEDDNI). Acidic residues predominate over residues 2082-2112 (DEGDGYQADEDIGGEDDAEDVDGEGDDEDDN). Residues asparagine 2143, asparagine 2211, asparagine 2239, and asparagine 2255 are each glycosylated (N-linked (GlcNAc...) asparagine). 2 6-Cys domains span residues 2197-2354 (IINI…VKSN) and 2357-2481 (KIYG…YEPY). Disulfide bonds link cysteine 2361-cysteine 2386, cysteine 2400-cysteine 2461, and cysteine 2411-cysteine 2459.

The protein resides in the cell surface. It is found in the cell membrane. Its function is as follows. Plays an essential role in male gamete fertility. Required for the binding to erythrocytes and thus, for the formation of exflagellation centers. The protein is Male gametocyte surface protein P230p (PFS230P) of Plasmodium falciparum (isolate 3D7).